Consider the following 668-residue polypeptide: Protein-glutamine gamma-glutamyltransferase (668 aa).

Residues 1-6 (MNAIPR) lie on the Cytoplasmic side of the membrane. A helical transmembrane segment spans residues 7 to 27 (VALVWLLVAQVLVILPHLAYM). The Periplasmic segment spans residues 28 to 50 (PLWIAAMWLGCAAWRVQVFRMRA). The chain crosses the membrane as a helical span at residues 51–71 (GYPRAWVKLALALLAGAGVWL). Residues 72–74 (SRG) are Cytoplasmic-facing. Residues 75–95 (SLVGLDAGAVLLIAAFILKLV) traverse the membrane as a helical segment. At 96–103 (EMKTRRDA) the chain is on the periplasmic side. 2 helical membrane passes run 104 to 124 (LVLV…DDGF) and 125 to 145 (LAAL…IGLQ). At 146–158 (QSAFASRPWPTLR) the chain is on the cytoplasmic side. Residues 159-179 (LAGGLLLQALPLMLLLFLFFP) form a helical membrane-spanning segment. Topologically, residues 180-548 (RLGPLWSLPM…FGGLDPTRLG (369 aa)) are periplasmic. Cys404 acts as the Nucleophile in catalysis. Residues His448 and Asp464 contribute to the active site. The chain crosses the membrane as a helical span at residues 549–569 (LLLGAAAILSVGLLALFLLKP). At 570-668 (WQGRGDLRSR…TRDGRGEEQA (99 aa)) the chain is on the cytoplasmic side.

This sequence belongs to the transglutaminase-like superfamily.

The protein resides in the cell inner membrane. The enzyme catalyses L-glutaminyl-[protein] + L-lysyl-[protein] = [protein]-L-lysyl-N(6)-5-L-glutamyl-[protein] + NH4(+). In terms of biological role, displays transglutaminase activity (TGase) in vitro. Plays a critical role in the viability of P.aeruginosa. Might contribute to an essential function linked to the cell wall. The sequence is that of Protein-glutamine gamma-glutamyltransferase (tgpA) from Pseudomonas aeruginosa (strain ATCC 15692 / DSM 22644 / CIP 104116 / JCM 14847 / LMG 12228 / 1C / PRS 101 / PAO1).